Here is a 436-residue protein sequence, read N- to C-terminus: Xylose isomerase (436 aa).

Active-site residues include H100 and D103. E231, E267, H270, D295, D306, D308, and D338 together coordinate Mg(2+).

The protein belongs to the xylose isomerase family. Homotetramer. The cofactor is Mg(2+).

The protein resides in the cytoplasm. It catalyses the reaction alpha-D-xylose = alpha-D-xylulofuranose. The polypeptide is Xylose isomerase (Rhizobium etli (strain ATCC 51251 / DSM 11541 / JCM 21823 / NBRC 15573 / CFN 42)).